Here is a 95-residue protein sequence, read N- to C-terminus: Co-chaperonin GroES (95 aa).

Belongs to the GroES chaperonin family. Heptamer of 7 subunits arranged in a ring. Interacts with the chaperonin GroEL.

It localises to the cytoplasm. In terms of biological role, together with the chaperonin GroEL, plays an essential role in assisting protein folding. The GroEL-GroES system forms a nano-cage that allows encapsulation of the non-native substrate proteins and provides a physical environment optimized to promote and accelerate protein folding. GroES binds to the apical surface of the GroEL ring, thereby capping the opening of the GroEL channel. This chain is Co-chaperonin GroES, found in Geobacter metallireducens (strain ATCC 53774 / DSM 7210 / GS-15).